The sequence spans 142 residues: Large ribosomal subunit protein uL13 (142 aa).

It belongs to the universal ribosomal protein uL13 family. In terms of assembly, part of the 50S ribosomal subunit.

Its function is as follows. This protein is one of the early assembly proteins of the 50S ribosomal subunit, although it is not seen to bind rRNA by itself. It is important during the early stages of 50S assembly. This Delftia acidovorans (strain DSM 14801 / SPH-1) protein is Large ribosomal subunit protein uL13.